We begin with the raw amino-acid sequence, 201 residues long: 3-isopropylmalate dehydratase small subunit (201 aa).

Belongs to the LeuD family. LeuD type 1 subfamily. As to quaternary structure, heterodimer of LeuC and LeuD.

The enzyme catalyses (2R,3S)-3-isopropylmalate = (2S)-2-isopropylmalate. Its pathway is amino-acid biosynthesis; L-leucine biosynthesis; L-leucine from 3-methyl-2-oxobutanoate: step 2/4. Its function is as follows. Catalyzes the isomerization between 2-isopropylmalate and 3-isopropylmalate, via the formation of 2-isopropylmaleate. The protein is 3-isopropylmalate dehydratase small subunit of Shewanella amazonensis (strain ATCC BAA-1098 / SB2B).